We begin with the raw amino-acid sequence, 149 residues long: Large ribosomal subunit protein bL9 (149 aa).

It belongs to the bacterial ribosomal protein bL9 family.

Binds to the 23S rRNA. The sequence is that of Large ribosomal subunit protein bL9 from Persephonella marina (strain DSM 14350 / EX-H1).